The chain runs to 441 residues: Probable indole-3-acetic acid-amido synthetase GH3.9 (441 aa).

It belongs to the IAA-amido conjugating enzyme family. As to expression, expressed in etiolated seedlings and roots.

Functionally, may catalyze the synthesis of indole-3-acetic acid (IAA)-amino acid conjugates, providing a mechanism for the plant to cope with the presence of excess auxin. This Oryza sativa subsp. japonica (Rice) protein is Probable indole-3-acetic acid-amido synthetase GH3.9 (GH3.9).